The sequence spans 788 residues: MLTDRLRLKKARKLLNKINKLGPKMQAMSDEKLQGQTAIFKKQLKEGKSLDDILPEAYATVREADKRILGMFPYDVQVLGAIVLHNGSIAEMKTGEGKTLVATMALYLNALEGKGAMLVTPNGYLASRDKKELAPVYEWLGLSVSLAFAEEKDSKKKITAKTKRKWYNSDIVYTTASSLAFDYLFNNLASSKENQYLRPFNYVIVDEVDEVLLDEAQTPFVVSSSPNVQSNLYHLADQFVRLLDPEVDYVFKKDDQLFWLTAHGIEKAEQFFKLDSLFSNESRSVYRHIILAMGAHLTMRRGHDYLVVKGEVVLLDEDSGRLKRGVQVSTGIHQAVEAKEKVELTKIQKTAASITFPALFALFNKVSGMSGTAKVNEEEFLQTYNLKVVTIPTRVPVIRKDYRPLIFLTTIDKLMTAVDDVVEMHKTGRPVLLVAGSVENSEIISELLLNIGIPHNVLNAYNAAYEAQIIKNAGQKNAVTIATNMAGRGTDIKLGPGVKELGGLAVIGTEMLPKRVELQLAGRAGRQGDPGSSQFLISLEDSFISSNNTPRQKKYYRKLMKKKSKGKDITLLSGPRIRFSLLMLRTRKEDLNELMRSQTNKMEIILSLQRKNFYTRRDKIMKTDDLQEDVDRIIDNALNLYLEKQDLSNKSDLKYFINQHVTYQQVNVPDNLKTKKAIKDFLKELAYKILDEKKHVLINKKQANDFYQQVIISSMDGNWIDQVDRIEKIKINAQQWGRSGRPQDLLHQEKAFEAYKDFLDKITLSTFDNLLLSKIFTNEKGQLVVVFN.

ATP-binding positions include Q77, 95 to 99, and D491; that span reads GEGKT.

Belongs to the SecA family. As to quaternary structure, monomer and homodimer. Part of the essential Sec protein translocation apparatus which comprises SecA, SecYEG and auxiliary proteins SecDF. Other proteins may also be involved.

Its subcellular location is the cell membrane. It localises to the cytoplasm. The enzyme catalyses ATP + H2O + cellular proteinSide 1 = ADP + phosphate + cellular proteinSide 2.. Its function is as follows. Part of the Sec protein translocase complex. Interacts with the SecYEG preprotein conducting channel. Has a central role in coupling the hydrolysis of ATP to the transfer of proteins into and across the cell membrane, serving as an ATP-driven molecular motor driving the stepwise translocation of polypeptide chains across the membrane. The chain is Protein translocase subunit SecA 2 from Lactobacillus johnsonii (strain CNCM I-12250 / La1 / NCC 533).